A 4486-amino-acid polypeptide reads, in one-letter code: Dynein axonemal heavy chain 9 (4486 aa).

The segment at 1 to 1831 (MRLAEERAAL…FANICDAQFL (1831 aa)) is stem. Coiled coils occupy residues 381–410 (DLLR…EFQD), 504–529 (QSTD…LGTI), 639–662 (AEGK…ETRL), 752–823 (TLLE…TWVT), and 1326–1355 (NINV…AWDA). AAA regions lie at residues 1832-2053 (YSYE…VLVV), 2113-2334 (ALVR…TRFK), 2440-2688 (EFDP…IFQG), and 2787-3036 (NHNE…EQRY). ATP is bound by residues 1870–1877 (GPAGTGKT), 2151–2158 (GGAGTGKS), 2478–2485 (GTAGTGKS), and 2825–2832 (GVGGSGKQ). Coiled coils occupy residues 3051–3154 (YQSL…AKAE), 3285–3341 (KRQA…AEVT), and 3640–3675 (LVEN…REHY). Residues 3051–3341 (YQSLLHRHRK…LKCQQEAEVT (291 aa)) form a stalk region. 2 AAA regions span residues 3429 to 3656 (LMDD…EVEK) and 3866 to 4092 (LRDF…VLYN).

It belongs to the dynein heavy chain family. In terms of assembly, consists of at least two heavy chains and a number of intermediate and light chains. Interacts with ODAD1. As to expression, expressed in upper and lower respiratory airway epithelia (at protein level). Not detected in spermatozoa (at protein level).

Its subcellular location is the cytoplasm. The protein resides in the cytoskeleton. The protein localises to the cilium axoneme. Force generating protein required for cilia beating in respiratory epithelia. Produces force towards the minus ends of microtubules. Dynein has ATPase activity; the force-producing power stroke is thought to occur on release of ADP. This chain is Dynein axonemal heavy chain 9, found in Homo sapiens (Human).